A 604-amino-acid polypeptide reads, in one-letter code: Threonine--tRNA ligase (604 aa).

The catalytic stretch occupies residues 209–500 (DHRKLGQEMG…LTEHFGGEFP (292 aa)). Zn(2+) is bound by residues Cys-301, His-352, and His-477.

This sequence belongs to the class-II aminoacyl-tRNA synthetase family. In terms of assembly, homodimer. The cofactor is Zn(2+).

Its subcellular location is the cytoplasm. It carries out the reaction tRNA(Thr) + L-threonine + ATP = L-threonyl-tRNA(Thr) + AMP + diphosphate + H(+). Functionally, catalyzes the attachment of threonine to tRNA(Thr) in a two-step reaction: L-threonine is first activated by ATP to form Thr-AMP and then transferred to the acceptor end of tRNA(Thr). Also edits incorrectly charged L-seryl-tRNA(Thr). The protein is Threonine--tRNA ligase of Helicobacter hepaticus (strain ATCC 51449 / 3B1).